Reading from the N-terminus, the 247-residue chain is ATP synthase subunit a, chloroplastic (247 aa).

Transmembrane regions (helical) follow at residues 38–58 (QVLITSWVVIAILLGSATLAV), 95–115 (VPFIGTMFLFIFVSNWSGALL), 134–154 (INTTVALALLTSVAYFYAGLT), 199–219 (LVVVVLVSLVPSIVPIPVMFL), and 220–240 (GLFTSGIQALIFATLAAAYIG).

Belongs to the ATPase A chain family. F-type ATPases have 2 components, CF(1) - the catalytic core - and CF(0) - the membrane proton channel. CF(1) has five subunits: alpha(3), beta(3), gamma(1), delta(1), epsilon(1). CF(0) has four main subunits: a, b, b' and c.

The protein localises to the plastid. It is found in the chloroplast thylakoid membrane. Functionally, key component of the proton channel; it plays a direct role in the translocation of protons across the membrane. The protein is ATP synthase subunit a, chloroplastic of Vitis vinifera (Grape).